A 287-amino-acid chain; its full sequence is MAFMSFINGFSTLFLVALLASSMMAAKGGNFYQDFDVTWGDHRAKIFNGGQLLSLSLDKTSGSGFRSKKEYLFGRIDMQLKLVAGNSAGTVTAYYLSSQGPTHDEIDFEFLGNLSGDPYIVHTNVFTQGKGNREQQFYLWFDPTRNFHTYSVVWNPRQIIFLIDNTPIRVFKNAESIGVPFPKNQPMRIYSSLWNADDWATRGGLVKTDWTKAPFTAYYRNFNAKTCSGACTESFGDGAWQSQELDAHSRRRLRWVQKNFMIYNYCTDLKRFPEGLPKECQRRSRFL.

The N-terminal stretch at 1-28 (MAFMSFINGFSTLFLVALLASSMMAAKG) is a signal peptide. A GH16 domain is found at 29–219 (GNFYQDFDVT…WTKAPFTAYY (191 aa)). Residue glutamate 105 is the Nucleophile of the active site. Residue glutamate 109 is the Proton donor of the active site. Xyloglucan is bound at residue glutamate 109. Asparagine 113 is a glycosylation site (N-linked (GlcNAc...) asparagine). Xyloglucan is bound by residues 122–124 (HTN), 132–134 (NRE), 198–199 (DW), and glycine 203. Cystine bridges form between cysteine 227-cysteine 231 and cysteine 266-cysteine 280. Arginine 271 provides a ligand contact to xyloglucan.

It belongs to the glycosyl hydrolase 16 family. XTH group 2 subfamily. In terms of processing, contains at least one intrachain disulfide bond essential for its enzymatic activity. In terms of tissue distribution, expressed in fruit pulp. Expressed in leaves, flowers, calyces, stems and fruits. Highest expression in leaves and lowest in fruits.

It is found in the secreted. Its subcellular location is the cell wall. The protein localises to the extracellular space. It localises to the apoplast. It catalyses the reaction breaks a beta-(1-&gt;4) bond in the backbone of a xyloglucan and transfers the xyloglucanyl segment on to O-4 of the non-reducing terminal glucose residue of an acceptor, which can be a xyloglucan or an oligosaccharide of xyloglucan.. Its function is as follows. Catalyzes xyloglucan endotransglycosylation (XET). Cleaves and religates xyloglucan polymers. Does not catalyze xyloglucan endohydrolysis (XEH). Overexpression in Arabidopsis transgenic plants results in elevated tolerance to abiotic stress, such as salt, ABA (abscisic acid) and drought stresses, and in the production of wider leaves. Overexpression in transgenic tomato plants slows down fruit ripening and softening, and the plants produce larger fruits. Both transgenic plants have larger and more irregular cells. Moreover, the fruits of the transgenic tomato have higher density of cell wall and intercellular spaces. May provide cells with more strength and thickness to maintain structural integrity. Probably involved in cell wall assembly and synthesis in fast growing tissues and in the maintenance of firmness in mature fruits. This Diospyros kaki (Kaki persimmon) protein is Xyloglucan endotransglucosylase protein 1.